Here is a 96-residue protein sequence, read N- to C-terminus: Dynein light chain roadblock-type 1 (96 aa).

Alanine 2 bears the N-acetylalanine mark.

The protein belongs to the GAMAD family. Homodimer. The cytoplasmic dynein 1 complex consists of two catalytic heavy chains (HCs) and a number of non-catalytic subunits presented by intermediate chains (ICs), light intermediate chains (LICs) and light chains (LCs); the composition seems to vary in respect to the IC, LIC and LC composition. The heavy chain homodimer serves as a scaffold for the probable homodimeric assembly of the respective non-catalytic subunits. The ICs and LICs bind directly to the HC dimer and the LCs assemble on the IC dimer. Interacts with DYNLRB2. Interacts with DYNC1I1 and DYNC1I2. Interacts with RAB6A isoform 1 (GTP-bound); the interaction is direct. Interacts with RAB6A isoform 2 (GDP-bound); the interaction is direct. Interacts with RAB6B (GDP-bound). In terms of tissue distribution, high expression in heart, liver, brain and pancreas; moderate in placenta, skeletal muscle and kidney; low in lung, prostate, testis, small intestine and colon. Isoform 1 expression is up-regulated in 64% hepatocellular carcinoma (HCC) patients.

The protein resides in the cytoplasm. It is found in the cytoskeleton. Its function is as follows. Acts as one of several non-catalytic accessory components of the cytoplasmic dynein 1 complex that are thought to be involved in linking dynein to cargos and to adapter proteins that regulate dynein function. Cytoplasmic dynein 1 acts as a motor for the intracellular retrograde motility of vesicles and organelles along microtubules. The polypeptide is Dynein light chain roadblock-type 1 (Homo sapiens (Human)).